The primary structure comprises 478 residues: Amino acid oxidase imqH (478 aa).

Residues 1-22 (MPAPKSIIIVGSGVFGLSTAHA) form the signal peptide. Residues Val14, Phe15, Asp38, Asn53, Ala57, Asn58, Arg63, and Ile64 each coordinate FAD. N-linked (GlcNAc...) asparagine glycosylation is found at Asn97 and Asn167. Val208 contributes to the FAD binding site. At Cys399 the chain carries S-8alpha-FAD cysteine. 2 residues coordinate FAD: Phe432 and Lys433.

It belongs to the MSOX/MTOX family. As to quaternary structure, dimer. Requires FAD as cofactor.

It participates in secondary metabolite biosynthesis. In terms of biological role, nonribosomal peptide synthetase; part of the gene cluster that mediates the biosynthesis of imizoquins A to D, tripeptide-derived alkaloids that serve a protective role against oxidative stress that are essential for normal germination. ImqB is a canonical three-module NRPS that assembles the tripeptide backbone of the imizoquins via condensation of Trp, Tyr, and Leu-derived precursors. N-methylation by imqF and phenol oxidation by imqC, followed by cyclization via the FAD-dependent oxidase imqH carry out the three-step transformation of L-tyrosine into tetrahydroisoquinoline. Importantly, this sequence requires the presence of a free amine in the tyrosine moiety, indicating that isoquinoline formation occurs prior to peptide bond formation. The imidazolidin-4-one ring of imizoquins could form following additional oxidation of the methyl-derived bridgehead carbon by imqH. Lastly, O-methylation by imqG and leucine hydroxylation by imqE complete biosynthesis of the imizoquins. The sequence is that of Amino acid oxidase imqH from Aspergillus flavus (strain ATCC 200026 / FGSC A1120 / IAM 13836 / NRRL 3357 / JCM 12722 / SRRC 167).